The chain runs to 310 residues: Small ribosomal subunit protein uS2 (310 aa).

Disordered regions lie at residues 213–240 (EEQA…GGAA) and 271–310 (WDSV…TDWA). The segment covering 216-227 (AALARQQEEANA) has biased composition (low complexity). The span at 297–310 (VTMQEQAKPSTDWA) shows a compositional bias: polar residues.

The protein belongs to the universal ribosomal protein uS2 family. As to quaternary structure, component of the small ribosomal subunit. Mature ribosomes consist of a small (40S) and a large (60S) subunit. The 40S subunit contains about 33 different proteins and 1 molecule of RNA (18S). The 60S subunit contains about 49 different proteins and 3 molecules of RNA (28S, 5.8S and 5S). Interacts with ribosomal protein S21.

The protein resides in the cytoplasm. Required for the assembly and/or stability of the 40S ribosomal subunit. Required for the processing of the 20S rRNA-precursor to mature 18S rRNA in a late step of the maturation of 40S ribosomal subunits. In Nematostella vectensis (Starlet sea anemone), this protein is Small ribosomal subunit protein uS2.